Reading from the N-terminus, the 383-residue chain is Succinyl-diaminopimelate desuccinylase (383 aa).

Position 73 (His73) interacts with Zn(2+). Residue Asp75 is part of the active site. Residue Asp107 participates in Zn(2+) binding. Glu141 (proton acceptor) is an active-site residue. The Zn(2+) site is built by Glu142, Glu170, and His356.

This sequence belongs to the peptidase M20A family. DapE subfamily. As to quaternary structure, homodimer. Requires Zn(2+) as cofactor. The cofactor is Co(2+).

The catalysed reaction is N-succinyl-(2S,6S)-2,6-diaminopimelate + H2O = (2S,6S)-2,6-diaminopimelate + succinate. Its pathway is amino-acid biosynthesis; L-lysine biosynthesis via DAP pathway; LL-2,6-diaminopimelate from (S)-tetrahydrodipicolinate (succinylase route): step 3/3. Catalyzes the hydrolysis of N-succinyl-L,L-diaminopimelic acid (SDAP), forming succinate and LL-2,6-diaminopimelate (DAP), an intermediate involved in the bacterial biosynthesis of lysine and meso-diaminopimelic acid, an essential component of bacterial cell walls. The protein is Succinyl-diaminopimelate desuccinylase of Pseudomonas syringae pv. tomato (strain ATCC BAA-871 / DC3000).